Reading from the N-terminus, the 586-residue chain is Scavenger receptor cysteine-rich domain-containing group B protein (586 aa).

The tract at residues 1–33 (MGPSERPSIGWTPKEAEMQIGPQPDGWSRGWKP) is disordered. A signal peptide spans 1-58 (MGPSERPSIGWTPKEAEMQIGPQPDGWSRGWKPGDRGAVPLPLSPALSFLLLFPLASA). SRCR domains are found at residues 69–169 (LRLV…VLCD), 200–300 (VRLV…VLCA), 355–455 (LRLV…ALCA), and 484–584 (LRLA…VLCQ). 12 disulfide bridges follow: Cys-94/Cys-158, Cys-107/Cys-168, Cys-138/Cys-148, Cys-225/Cys-289, Cys-238/Cys-299, Cys-269/Cys-279, Cys-380/Cys-444, Cys-393/Cys-454, Cys-424/Cys-434, Cys-509/Cys-573, Cys-522/Cys-583, and Cys-553/Cys-563.

Its subcellular location is the secreted. The sequence is that of Scavenger receptor cysteine-rich domain-containing group B protein from Mus musculus (Mouse).